We begin with the raw amino-acid sequence, 154 residues long: Myoglobin (154 aa).

The region spanning 2–148 is the Globin domain; it reads GLSDGEWQLV…FRNDIAAKYK (147 aa). Residue Ser4 is modified to Phosphoserine. His65 provides a ligand contact to nitrite. O2 is bound at residue His65. The residue at position 68 (Thr68) is a Phosphothreonine. His94 provides a ligand contact to heme b.

It belongs to the globin family. As to quaternary structure, monomeric.

It is found in the cytoplasm. The protein localises to the sarcoplasm. It catalyses the reaction Fe(III)-heme b-[protein] + nitric oxide + H2O = Fe(II)-heme b-[protein] + nitrite + 2 H(+). It carries out the reaction H2O2 + AH2 = A + 2 H2O. Functionally, monomeric heme protein which primary function is to store oxygen and facilitate its diffusion within muscle tissues. Reversibly binds oxygen through a pentacoordinated heme iron and enables its timely and efficient release as needed during periods of heightened demand. Depending on the oxidative conditions of tissues and cells, and in addition to its ability to bind oxygen, it also has a nitrite reductase activity whereby it regulates the production of bioactive nitric oxide. Under stress conditions, like hypoxia and anoxia, it also protects cells against reactive oxygen species thanks to its pseudoperoxidase activity. This Vulpes chama (Cape fox) protein is Myoglobin (MB).